The primary structure comprises 537 residues: Cytochrome P450 monooxygenase AOL_s00215g282 (537 aa).

The chain crosses the membrane as a helical span at residues 9–29; sequence ATVVLCGSIVTVSIAYVIFVV. An N-linked (GlcNAc...) asparagine glycan is attached at Asn-126. Cys-451 contacts heme.

It belongs to the cytochrome P450 family. Requires heme as cofactor.

It localises to the membrane. Its pathway is secondary metabolite biosynthesis; terpenoid biosynthesis. In terms of biological role, cytochrome P450 monooxygenase; part of the gene cluster that mediates the biosynthesis of sesquiterpenyl epoxy-cyclohexenoids (SECs) such as anthrobotrisins and arthrosporols, metabolites that possess a novel hybrid carbon skeleton consisting of a polyketide-derived epoxycyclohexenol combined with a terpenoid-derived monocyclic sesquiterpenol substructure (PKS-PTS hybrid). The SEC pathway plays an important role for fungal soil colonization via decreasing fungal nematode-capturing ability. Within the pathway, the cytochrome P450 monooxygenase AOL_s00215g282 acts as a m-cresol hydrolase that converts m-cresol to toluquinol. The pathway begins with the biosynthesis of 6-methylsalicylic acid (6-MSA), the first precursor of the polyketide-derived epoxycyclohexenol in arthrosporols, by the polyketide synthase (PKS) AOL_s00215g283 via condensation of 1 acetate and 3 malonate units. The 6-methylsalicylic acid decarboxylase AOL_s00215g281 then catalyzes the decarboxylation of 6-methylsalicylic acid to yield m-cresol. The cytochrome P450 monooxygenase AOL_s00215g282 further oxidizes m-cresol to yield toluquinol. With the assistance of the oxidoreductase AOL_s00215g277, the polyprenyl transferase AOL_s00215g276 catalyzes the farnesylation of toluquinol to produce farnesyl hydroquinone, the hybrid precursor for biosynthesis of SECs. Farnesyl hydroquinone undergoes epoxidation and then subsequent dehydrogenation to form farnesyl epoxy-quinone, the first and simplest SEC. The cytochrome P450 monooxygenase AOL_s00215g278 and the FAD-dependent monooxygenase AOL_s00215g279 might be involved in the oxygenation of the phenol moiety, most likely in the epoxy formation. The cytochrome P450 monooxygenases AOL_s00215g274 and AOL_s00215g280 are involved in specific regional ketone reductions at respectively C-4 and C-1 of farnesyl epoxy-quinone PubMed:33823587. This Arthrobotrys oligospora (strain ATCC 24927 / CBS 115.81 / DSM 1491) (Nematode-trapping fungus) protein is Cytochrome P450 monooxygenase AOL_s00215g282.